A 148-amino-acid polypeptide reads, in one-letter code: Dermatopontin (148 aa).

Cysteines 14 and 40 form a disulfide. An N-linked (GlcNAc...) asparagine glycan is attached at Asn44. Intrachain disulfides connect Cys66/Cys93 and Cys103/Cys147.

This sequence belongs to the dermatopontin family. Post-translationally, the terminal mannose residues of the polysaccharide are 3-O-methylated. No tyrosine sulfation was detected.

It localises to the secreted. Its subcellular location is the extracellular space. The protein resides in the extracellular matrix. Functionally, seems to mediate adhesion by cell surface integrin binding. This chain is Dermatopontin, found in Biomphalaria glabrata (Bloodfluke planorb).